Here is a 214-residue protein sequence, read N- to C-terminus: Orotate phosphoribosyltransferase (214 aa).

K26 contacts 5-phospho-alpha-D-ribose 1-diphosphate. F34 to F35 serves as a coordination point for orotate. 5-phospho-alpha-D-ribose 1-diphosphate-binding positions include Y72–K73, R99, K100, K103, H105, and D124–A132. Positions 128 and 157 each coordinate orotate.

This sequence belongs to the purine/pyrimidine phosphoribosyltransferase family. PyrE subfamily. Homodimer. Requires Mg(2+) as cofactor.

The enzyme catalyses orotidine 5'-phosphate + diphosphate = orotate + 5-phospho-alpha-D-ribose 1-diphosphate. Its pathway is pyrimidine metabolism; UMP biosynthesis via de novo pathway; UMP from orotate: step 1/2. Its function is as follows. Catalyzes the transfer of a ribosyl phosphate group from 5-phosphoribose 1-diphosphate to orotate, leading to the formation of orotidine monophosphate (OMP). In Pseudomonas fluorescens (strain ATCC BAA-477 / NRRL B-23932 / Pf-5), this protein is Orotate phosphoribosyltransferase.